We begin with the raw amino-acid sequence, 571 residues long: uncharacterized protein (571 aa).

This is an uncharacterized protein from Methanocaldococcus jannaschii (strain ATCC 43067 / DSM 2661 / JAL-1 / JCM 10045 / NBRC 100440) (Methanococcus jannaschii).